Here is a 420-residue protein sequence, read N- to C-terminus: Tyrosine--tRNA ligase (420 aa).

Residue tyrosine 36 coordinates L-tyrosine. The short motif at 41–50 (PTADSMHIGH) is the 'HIGH' region element. 2 residues coordinate L-tyrosine: tyrosine 170 and glutamine 174. The 'KMSKS' region motif lies at 231–235 (KFGKS). Lysine 234 is a binding site for ATP. One can recognise an S4 RNA-binding domain in the interval 353–420 (TNIVDFIVEA…KKKYFMVKYK (68 aa)).

This sequence belongs to the class-I aminoacyl-tRNA synthetase family. TyrS type 1 subfamily. Homodimer.

The protein localises to the cytoplasm. It catalyses the reaction tRNA(Tyr) + L-tyrosine + ATP = L-tyrosyl-tRNA(Tyr) + AMP + diphosphate + H(+). Catalyzes the attachment of tyrosine to tRNA(Tyr) in a two-step reaction: tyrosine is first activated by ATP to form Tyr-AMP and then transferred to the acceptor end of tRNA(Tyr). The sequence is that of Tyrosine--tRNA ligase from Staphylococcus carnosus (strain TM300).